The primary structure comprises 218 residues: uncharacterized protein (218 aa).

Residues 111-193 (NSIYLVEGDF…ITKVIEIKAA (83 aa)) form the Toprim domain.

This is an uncharacterized protein from Mycoplasma genitalium (strain ATCC 33530 / DSM 19775 / NCTC 10195 / G37) (Mycoplasmoides genitalium).